We begin with the raw amino-acid sequence, 1073 residues long: TSC22 domain family protein 1 (1073 aa).

The segment at 1–98 (MHQPPESTAA…SQAQLQAQPL (98 aa)) is required for interaction with TGFBR1 and promotion of TGF-beta signaling. 6 disordered regions span residues 22-110 (MAHP…KKSG), 125-205 (ISSN…PHLP), 220-288 (LHHH…SPAS), 458-486 (VTSE…SVGS), 607-628 (YSQA…QQLQ), and 742-766 (VQQP…QVVP). Residues 36 to 45 (GSASALNAAG) show a composition bias toward low complexity. The segment covering 58-70 (FPPPSLLQPPPPA) has biased composition (pro residues). Residues 84-100 (SLNLLSQAQLQAQPLAP) show a composition bias toward low complexity. Acidic residues predominate over residues 133 to 142 (EDTESYDDLD). Basic residues predominate over residues 220–240 (LHHHHQIHHGHHLQHGHHHPS). Residues 257-271 (PVSRKLSTTGSSDSI) show a composition bias toward polar residues. Phosphoserine is present on Ser-263. 2 stretches are compositionally biased toward low complexity: residues 272–288 (TPVA…SPAS) and 465–483 (TSGS…YTES). Positions 614 to 625 (VQTPLPGAPPPQ) are enriched in pro residues. The segment covering 742–764 (VQQPSTQVPPSVIQQGAPPSSQV) has biased composition (polar residues). Residues 1006-1027 (LKEQIKELIEKNSQLEQENNLL) form a leucine-zipper region. Positions 1037–1073 (AQFQAQLQTGSPPATTQPQGTTQPPAQPASQGSGPTA) are disordered. Residues 1044 to 1073 (QTGSPPATTQPQGTTQPPAQPASQGSGPTA) are compositionally biased toward low complexity.

The protein belongs to the TSC-22/Dip/Bun family. In terms of assembly, forms homodimers. Forms heterodimers. Component of a complex composed of TSC22D1 (via N-terminus), TGFBR1 and TGFBR2; the interaction between TSC22D1 and TGFBR1 is inhibited by SMAD7 and promoted by TGFB1. Interacts with SMAD7; the interaction requires TGF-beta and the interaction is inhibited by TGFBR1. Interacts with TPT1/fortilin; interaction results in the destabilization of TSC22D1 protein and prevents TSC22D1-mediated apoptosis. Interacts with SMAD4 (via N-terminus). Interacts with ACVRL1/ALK1, ACVR1/ALK2, BMPR1A/ALK3, ACVR1B/ALK4, BMPR1B/ALK6, ACVR2A/ACTRII, and BMPR2. Interacts with SMAD6. Interacts with TFE3; the interaction is enhanced in the presence of TGF-beta. As to quaternary structure, forms a heterodimer with TSC22D4/THG1. Forms a heterodimer with TSC22D4/THG1. Interacts with histone H1-2. Interacts with GNL3. In terms of assembly, interacts with histone H1-2. As to expression, ubiquitously expressed in adult tissues. Expressed in the postmitotic epithelial compartment at the top of intestinal mucosal villi.

The protein resides in the cytoplasm. It is found in the nucleus. Its subcellular location is the cell membrane. The protein localises to the mitochondrion. Its function is as follows. Transcriptional repressor. Acts on the C-type natriuretic peptide (CNP) promoter. Acts to promote CASP3-mediated apoptosis. Positively regulates TGF-beta signaling by interacting with SMAD7 which inhibits binding of SMAD7 to TGFBR1, preventing recruitment of SMURF ubiquitin ligases to TGFBR1 and inhibiting SMURF-mediated ubiquitination and degradation of TGFBR1. Contributes to enhancement of TGF-beta signaling by binding to and modulating the transcription activator activity of SMAD4. Promotes TGF-beta-induced transcription of COL1A2; via its interaction with TFE3 at E-boxes in the gene proximal promoter. Plays a role in the repression of hematopoietic precursor cell growth. Promotes IL2 deprivation-induced apoptosis in T-lymphocytes, via repression of TSC22D3/GILZ transcription and activation of the caspase cascade. May act to negatively regulate TGFB3 signaling and thereby inhibit cell death in mammary gland cells. Functionally, positively regulates cell death in response to TGFB3 during mammary gland involution. This is TSC22 domain family protein 1 from Homo sapiens (Human).